A 316-amino-acid polypeptide reads, in one-letter code: Mitochondrial distribution and morphology protein 12 (316 aa).

Residues 1–312 (MSIDLEWNGL…FPNFHTLVLG (312 aa)) form the SMP-LTD domain.

This sequence belongs to the MDM12 family. Component of the ER-mitochondria encounter structure (ERMES) or MDM complex, composed of MMM1, MDM10, MDM12 and MDM34. An MMM1 homodimer associates with one molecule of MDM12 on each side in a pairwise head-to-tail manner, and the SMP-LTD domains of MMM1 and MDM12 generate a continuous hydrophobic tunnel for phospholipid trafficking.

Its subcellular location is the mitochondrion outer membrane. The protein localises to the endoplasmic reticulum membrane. Component of the ERMES/MDM complex, which serves as a molecular tether to connect the endoplasmic reticulum (ER) and mitochondria. Components of this complex are involved in the control of mitochondrial shape and protein biogenesis, and function in nonvesicular lipid trafficking between the ER and mitochondria. MDM12 is required for the interaction of the ER-resident membrane protein MMM1 and the outer mitochondrial membrane-resident beta-barrel protein MDM10. The MDM12-MMM1 subcomplex functions in the major beta-barrel assembly pathway that is responsible for biogenesis of all mitochondrial outer membrane beta-barrel proteins, and acts in a late step after the SAM complex. The MDM10-MDM12-MMM1 subcomplex further acts in the TOM40-specific pathway after the action of the MDM12-MMM1 complex. Essential for establishing and maintaining the structure of mitochondria and maintenance of mtDNA nucleoids. The sequence is that of Mitochondrial distribution and morphology protein 12 from Postia placenta (strain ATCC 44394 / Madison 698-R) (Brown rot fungus).